The chain runs to 205 residues: GTP cyclohydrolase-2 (205 aa).

49–53 (RVHSE) contacts GTP. Residues C54, C65, and C67 each coordinate Zn(2+). GTP-binding positions include Q70, 92-94 (EGR), and T114. Catalysis depends on D126, which acts as the Proton acceptor. The active-site Nucleophile is the R128. GTP-binding residues include T149 and K154.

The protein belongs to the GTP cyclohydrolase II family. It depends on Zn(2+) as a cofactor.

The enzyme catalyses GTP + 4 H2O = 2,5-diamino-6-hydroxy-4-(5-phosphoribosylamino)-pyrimidine + formate + 2 phosphate + 3 H(+). It functions in the pathway cofactor biosynthesis; riboflavin biosynthesis; 5-amino-6-(D-ribitylamino)uracil from GTP: step 1/4. Catalyzes the conversion of GTP to 2,5-diamino-6-ribosylamino-4(3H)-pyrimidinone 5'-phosphate (DARP), formate and pyrophosphate. This is GTP cyclohydrolase-2 from Pseudomonas syringae pv. tomato (strain ATCC BAA-871 / DC3000).